A 163-amino-acid polypeptide reads, in one-letter code: MATLLAWVGVSCCELAEEDFLAVSPLDPRYREVHYVLLDPSCSGSGMPSRQLEDPGAGTPSPVRLHALAGFQQRALCHALTFPSLQRLVYSMCSLCQEENEDMVPDALQQNPGAFRLAPALPARPHRGLSTFPGAEHCLRASPKTTLSGGFFVAVIERVEMPT.

C93 serves as the catalytic Nucleophile.

It belongs to the class I-like SAM-binding methyltransferase superfamily. RsmB/NOP family. As to expression, ubiquitous.

This Homo sapiens (Human) protein is Putative NOL1/NOP2/Sun domain family member 5B (NSUN5P1).